A 306-amino-acid polypeptide reads, in one-letter code: Pantothenate kinase (306 aa).

91–98 (GSVAVGKS) provides a ligand contact to ATP.

This sequence belongs to the prokaryotic pantothenate kinase family.

It is found in the cytoplasm. It carries out the reaction (R)-pantothenate + ATP = (R)-4'-phosphopantothenate + ADP + H(+). The protein operates within cofactor biosynthesis; coenzyme A biosynthesis; CoA from (R)-pantothenate: step 1/5. The polypeptide is Pantothenate kinase (Streptococcus pyogenes serotype M12 (strain MGAS2096)).